A 314-amino-acid polypeptide reads, in one-letter code: BTB/POZ domain-containing adapter for CUL3-mediated RhoA degradation protein 2 (314 aa).

The 69-residue stretch at 32-100 (KYVRLNVGGS…LRDDTIALPK (69 aa)) folds into the BTB domain.

The protein belongs to the BACURD family. Component of the BCR(TNFAIP1) E3 ubiquitin ligase complex, at least composed of CUL3, TNFAIP1/BACURD2 and RBX1.

The protein localises to the cytoplasm. It is found in the nucleus. Its subcellular location is the endosome. The protein operates within protein modification; protein ubiquitination. Its function is as follows. Substrate-specific adapter of a BCR (BTB-CUL3-RBX1) E3 ubiquitin-protein ligase complex involved in regulation of cytoskeleton structure. The BCR(TNFAIP1) E3 ubiquitin ligase complex mediates the ubiquitination of target proteins, leading to their degradation by the proteasome. The protein is BTB/POZ domain-containing adapter for CUL3-mediated RhoA degradation protein 2 (TNFAIP1) of Gallus gallus (Chicken).